The primary structure comprises 362 residues: Type-1 angiotensin II receptor A (362 aa).

Residues 1–26 lie on the Extracellular side of the membrane; the sequence is MSNASTVETSDVERIAVNCSKSGMHN. N-linked (GlcNAc...) asparagine glycans are attached at residues asparagine 3 and asparagine 18. Cystine bridges form between cysteine 19–cysteine 273 and cysteine 102–cysteine 181. Residues 27–56 form a helical membrane-spanning segment; the sequence is YIFIAIPIIYSTIFVVGVFGNSMVVIVIYS. Topologically, residues 57 to 62 are cytoplasmic; the sequence is YMKMKT. A helical membrane pass occupies residues 63–90; that stretch reads VASIFLMNLALSDLCFVITLPLWAAYTA. Over 91-99 the chain is Extracellular; that stretch reads MHYHWPFGN. A helical membrane pass occupies residues 100-126; sequence FLCKVASTAITLNLYTTVFLLTCLSID. The Cytoplasmic segment spans residues 127–142; that stretch reads RYSAIVHPMKSRIWRT. Residues 143–166 form a helical membrane-spanning segment; sequence AMVARLTCVGIWLVAFLASMPSII. The Extracellular portion of the chain corresponds to 167 to 191; sequence YRQIYLFHDTNQTVCAIVYDSGHIY. Residue arginine 168 participates in angiotensin II binding. A glycan (N-linked (GlcNAc...) asparagine) is linked at asparagine 177. The angiotensin II site is built by tyrosine 185 and lysine 200. Residues 192 to 217 form a helical membrane-spanning segment; it reads FMVGMSLAKNIVGFLIPFLIILTSYT. The Cytoplasmic segment spans residues 218–238; sequence LIGKTLKEVYRAQRARNDDIF. Residues 239–267 traverse the membrane as a helical segment; the sequence is KMIVAVVLLFFFCWIPYQVFTFLDVLIQM. At 268-277 the chain is on the extracellular side; sequence DVIQNCKMYD. The helical transmembrane segment at 278–303 threads the bilayer; that stretch reads IVDTGMPITICIAYFNSCLNPFLYGF. Topologically, residues 304 to 362 are cytoplasmic; it reads FGKNFRKHFLQLIKYIPPKMRTHASVNTKSSLVSSSLSDTKRASKKIALQMTDNEEHCK. Residue cysteine 361 is the site of S-palmitoyl cysteine attachment.

Belongs to the G-protein coupled receptor 1 family. Post-translationally, C-terminal Ser or Thr residues may be phosphorylated. In terms of tissue distribution, expressed in lung, liver, kidney, and spleen, with highest expression in the heart.

The protein resides in the cell membrane. Receptor for angiotensin II, a vasoconstricting peptide, which acts as a key regulator of blood pressure and sodium retention by the kidney. The activated receptor in turn couples to G-alpha proteins G(q) (GNAQ, GNA11, GNA14 or GNA15) and thus activates phospholipase C and increases the cytosolic Ca(2+) concentrations, which in turn triggers cellular responses such as stimulation of protein kinase C. The sequence is that of Type-1 angiotensin II receptor A (agtr1-a) from Xenopus laevis (African clawed frog).